The sequence spans 226 residues: PKHD-type hydroxylase PSPA7_5129 (226 aa).

Residues 78-178 form the Fe2OG dioxygenase domain; that stretch reads KVFPPLFNCY…RYASFFWTQS (101 aa). The Fe cation site is built by histidine 96, aspartate 98, and histidine 159. Residue arginine 169 coordinates 2-oxoglutarate.

The cofactor is Fe(2+). Requires L-ascorbate as cofactor.

The protein is PKHD-type hydroxylase PSPA7_5129 of Pseudomonas paraeruginosa (strain DSM 24068 / PA7) (Pseudomonas aeruginosa (strain PA7)).